Here is a 121-residue protein sequence, read N- to C-terminus: Putative ankyrin repeat protein L215 (121 aa).

2 ANK repeats span residues 10–40 (QYDS…SFKE) and 42–71 (IHET…NKLV).

The chain is Putative ankyrin repeat protein L215 from Acanthamoeba polyphaga mimivirus (APMV).